Here is a 537-residue protein sequence, read N- to C-terminus: Zinc finger protein 835 (537 aa).

The disordered stretch occupies residues 12–109; sequence AELEGNWKHE…RERGGGPKKP (98 aa). Polar residues predominate over residues 63–77; that stretch reads TISSPAATQASVPDD. The segment covering 89–104 has biased composition (basic and acidic residues); it reads SPKERHPDSRQRERGG. 14 consecutive C2H2-type zinc fingers follow at residues 110–132, 138–160, 166–188, 194–216, 222–244, 250–272, 278–300, 306–328, 334–356, 362–384, 390–412, 418–440, 446–468, and 474–496; these read WKCG…QRIH, FACP…QRTH, YACH…WRTH, HRCA…RRVH, YACA…QRIH, YECS…QRIH, YRCG…RRVH, YTCQ…RRIH, YACG…QRTH, YPCH…RLVH, YRCL…QKIH, YKCG…QRTH, YTCP…HIVH, and YECS…QRTH. Positions 497-537 are disordered; it reads ADSSGRLCPAPTPDSTPGLSQGGETCQQGCPGRNPRGPAED. Over residues 509–524 the composition is skewed to polar residues; that stretch reads PDSTPGLSQGGETCQQ.

This sequence belongs to the krueppel C2H2-type zinc-finger protein family.

It is found in the nucleus. Its function is as follows. May be involved in transcriptional regulation. The protein is Zinc finger protein 835 (ZNF835) of Homo sapiens (Human).